We begin with the raw amino-acid sequence, 85 residues long: MPRRILQGTVVSDKGDKTVIVLVERRVMHPVYKKFIKQSKKYAAHDEANAFKIGDVVQIEECRPISKRKRWTVVTGAAAEAGAAS.

It belongs to the universal ribosomal protein uS17 family. As to quaternary structure, part of the 30S ribosomal subunit.

Its function is as follows. One of the primary rRNA binding proteins, it binds specifically to the 5'-end of 16S ribosomal RNA. The polypeptide is Small ribosomal subunit protein uS17 (Rhodospirillum centenum (strain ATCC 51521 / SW)).